The sequence spans 461 residues: MVHQSNGHGEAAAAAANGKSNGHAAAANGKSNGHAAAAAVEWNFARGKDGILATTGAKNSIRAIRYKISASVEESGPRPVLPLAHGDPSVFPAFRTAVEAEDAVAAALRTGQFNCYAAGVGLPAARSAVAEHLSQGVPYKLSADDVFLTAGGTQAIEVIIPVLAQTAGANILLPRPGYPNYEARAAFNKLEVRHFDLIPDKGWEIDIDSLESIADKNTTAMVIINPNNPCGSVYSYDHLAKVAEVARKLGILVIADEVYGKLVLGSAPFIPMGVFGHIAPVLSIGSLSKSWIVPGWRLGWVAVYDPTKILEKTKISTSITNYLNVSTDPATFVQEALPKILENTKADFFKRIIGLLKESSEICYREIKENKYITCPHKPEGSMFVMVKLNLHLLEEIHDDIDFCCKLAKEESVILCPGSVLGMENWVRITFACVPSSLQDGLERVKSFCQRNKKKNSINGC.

Residues 1–29 are disordered; sequence MVHQSNGHGEAAAAAANGKSNGHAAAANG. A compositionally biased stretch (low complexity) spans 11–29; the sequence is AAAAAANGKSNGHAAAANG. An N6-(pyridoxal phosphate)lysine modification is found at Lys-289.

The protein belongs to the class-I pyridoxal-phosphate-dependent aminotransferase family. Pyridoxal 5'-phosphate serves as cofactor. Expressed in roots, but not in leaves.

The catalysed reaction is nicotianamine + 2-oxoglutarate = 3''-deamino-3''-oxonicotianamine + L-glutamate. Involved in biosynthesis of mugineic acid family phytosiderophores. The protein is Nicotianamine aminotransferase A of Hordeum vulgare (Barley).